A 142-amino-acid chain; its full sequence is 5a,11a-dehydrotetracycline/5a,11a-dehydrooxytetracycline reductase (142 aa).

This sequence belongs to the pyridoxamine 5'-phosphate oxidase family.

It catalyses the reaction tetracycline + oxidized coenzyme F420-(gamma-L-Glu)(n) + H(+) = 5a,11a-dehydrotetracycline + reduced coenzyme F420-(gamma-L-Glu)(n). It carries out the reaction oxytetracycline + oxidized coenzyme F420-(gamma-L-Glu)(n) + H(+) = 5a,11a-dehydrooxytetracycline + reduced coenzyme F420-(gamma-L-Glu)(n). Its pathway is antibiotic biosynthesis; oxytetracycline biosynthesis. In terms of biological role, involved in the biosynthesis of the antibiotics tetracycline and oxytetracycline. Catalyzes the C(5) reduction of 5a,11a-dehydrooxytetracycline to yield oxytetracycline as a major product. Also catalyzes the C(12) reduction of 5a,11a-dehydrotetracycline (12-dehydrotetracycline) to produce tetracycline as a minor product. This chain is 5a,11a-dehydrotetracycline/5a,11a-dehydrooxytetracycline reductase, found in Streptomyces rimosus subsp. rimosus (strain ATCC 10970 / DSM 40260 / JCM 4667 / NRRL 2234).